The chain runs to 679 residues: HEAT repeat-containing protein 3 (679 aa).

Basic residues predominate over residues 1–11; that stretch reads MGKSRTKRFKR. A disordered region spans residues 1 to 40; it reads MGKSRTKRFKRPQFSPIESCQAEAAAASNGTGDEEDDGPA. Ser15 carries the phosphoserine modification. HEAT repeat units lie at residues 38–69 and 74–110; these read GPAA…VQQR and DLAR…SACG. Ser144 is modified (phosphoserine). The residue at position 339 (Thr339) is a Phosphothreonine.

This sequence belongs to the nuclear import and ribosome assembly adapter family. As to quaternary structure, component of a hexameric 5S RNP precursor complex, composed of 5S RNA, RRS1, RPF2/BXDC1, RPL5, RPL11 and HEATR3; this complex acts as a precursor for ribosome assembly.

Its function is as follows. Plays a role in ribosome biogenesis and in nuclear import of the 60S ribosomal protein L5/large ribosomal subunit protein uL18 (RPL5). Required for proper erythrocyte maturation. The polypeptide is HEAT repeat-containing protein 3 (Heatr3) (Mus musculus (Mouse)).